Here is a 252-residue protein sequence, read N- to C-terminus: 5-oxoprolinase subunit A (252 aa).

Belongs to the LamB/PxpA family. As to quaternary structure, forms a complex composed of PxpA, PxpB and PxpC.

The enzyme catalyses 5-oxo-L-proline + ATP + 2 H2O = L-glutamate + ADP + phosphate + H(+). In terms of biological role, catalyzes the cleavage of 5-oxoproline to form L-glutamate coupled to the hydrolysis of ATP to ADP and inorganic phosphate. The protein is 5-oxoprolinase subunit A of Mycobacterium leprae (strain Br4923).